Consider the following 707-residue polypeptide: uncharacterized protein (707 aa).

Disordered stretches follow at residues 15–122 (ALAK…LESY) and 667–707 (ESVQ…DIDE). 2 stretches are compositionally biased toward basic and acidic residues: residues 18-32 (KKNDKIKKKDTDKGI) and 40-52 (EGKDETLKRDVEK). Ser-112 bears the Phosphoserine mark. Residues 659–700 (EEQRKLIRESVQQDQEHKEQMRQKKKQALKSDDIELDDLSEE) adopt a coiled-coil conformation. A compositionally biased stretch (acidic residues) spans 692–707 (IELDDLSEEEAEDIDE).

The protein belongs to the NOC2 family.

It localises to the nucleus. The protein resides in the nucleolus. This is an uncharacterized protein from Schizosaccharomyces pombe (strain 972 / ATCC 24843) (Fission yeast).